The following is a 674-amino-acid chain: Methionine--tRNA ligase (674 aa).

The 'HIGH' region signature appears at 11–21 (PYANGDLHLGH). Positions 142, 145, 155, and 158 each coordinate Zn(2+). A 'KMSKS' region motif is present at residues 330-334 (KMSKS). Residue Lys333 coordinates ATP. The region spanning 574-674 (DFMKVDLRIA…EGAQPGMRVK (101 aa)) is the tRNA-binding domain.

It belongs to the class-I aminoacyl-tRNA synthetase family. MetG type 1 subfamily. Homodimer. Zn(2+) serves as cofactor.

The protein resides in the cytoplasm. It carries out the reaction tRNA(Met) + L-methionine + ATP = L-methionyl-tRNA(Met) + AMP + diphosphate. Its function is as follows. Is required not only for elongation of protein synthesis but also for the initiation of all mRNA translation through initiator tRNA(fMet) aminoacylation. The chain is Methionine--tRNA ligase from Francisella tularensis subsp. tularensis (strain FSC 198).